Consider the following 451-residue polypeptide: Phosphoglucosamine mutase (451 aa).

Serine 103 serves as the catalytic Phosphoserine intermediate. The Mg(2+) site is built by serine 103, aspartate 243, aspartate 245, and aspartate 247. Phosphoserine is present on serine 103.

The protein belongs to the phosphohexose mutase family. Mg(2+) is required as a cofactor. In terms of processing, activated by phosphorylation.

The enzyme catalyses alpha-D-glucosamine 1-phosphate = D-glucosamine 6-phosphate. Functionally, catalyzes the conversion of glucosamine-6-phosphate to glucosamine-1-phosphate. This is Phosphoglucosamine mutase from Lactobacillus gasseri (strain ATCC 33323 / DSM 20243 / BCRC 14619 / CIP 102991 / JCM 1131 / KCTC 3163 / NCIMB 11718 / NCTC 13722 / AM63).